A 278-amino-acid polypeptide reads, in one-letter code: Sulfur carrier protein FdhD (278 aa).

Cys124 (cysteine persulfide intermediate) is an active-site residue.

The protein belongs to the FdhD family.

It is found in the cytoplasm. Functionally, required for formate dehydrogenase (FDH) activity. Acts as a sulfur carrier protein that transfers sulfur from IscS to the molybdenum cofactor prior to its insertion into FDH. The polypeptide is Sulfur carrier protein FdhD (Burkholderia cenocepacia (strain ATCC BAA-245 / DSM 16553 / LMG 16656 / NCTC 13227 / J2315 / CF5610) (Burkholderia cepacia (strain J2315))).